The sequence spans 371 residues: Mannonate dehydratase (371 aa).

Belongs to the mannonate dehydratase family. Requires Fe(2+) as cofactor. Mn(2+) is required as a cofactor.

It catalyses the reaction D-mannonate = 2-dehydro-3-deoxy-D-gluconate + H2O. It functions in the pathway carbohydrate metabolism; pentose and glucuronate interconversion. In terms of biological role, catalyzes the dehydration of D-mannonate. The protein is Mannonate dehydratase of Geobacillus thermodenitrificans (strain NG80-2).